The primary structure comprises 205 residues: UPF0637 protein OB1420 (205 aa).

Belongs to the UPF0637 family.

This chain is UPF0637 protein OB1420, found in Oceanobacillus iheyensis (strain DSM 14371 / CIP 107618 / JCM 11309 / KCTC 3954 / HTE831).